A 292-amino-acid chain; its full sequence is Tetratricopeptide repeat protein 1 (292 aa).

2 stretches are compositionally biased toward basic and acidic residues: residues 1–12 (MEEKSEDCKVPE) and 47–64 (KAAE…ECFH). Residues 1 to 125 (MEEKSEDCKV…SAKLKEEGNE (125 aa)) are disordered. Over residues 88–98 (SSSELDEEYLI) the composition is skewed to acidic residues. Ser90 is subject to Phosphoserine. The span at 99 to 125 (ELEKNMPEEEKQKRREESAKLKEEGNE) shows a compositional bias: basic and acidic residues. 3 TPR repeats span residues 116 to 149 (SAKL…CPAC), 155 to 188 (SVLF…NPTY), and 189 to 222 (IRAI…DPSV).

As to quaternary structure, interacts with the GAP domain of NF1. Interacts (via TPR repeats) with HSP90AA1 and HSPA8.

The polypeptide is Tetratricopeptide repeat protein 1 (Ttc1) (Mus musculus (Mouse)).